Here is a 237-residue protein sequence, read N- to C-terminus: MLFAWITDPNAWLALGTLTLLEIVLGIDNIIFLSLVVAKLPTAQRAHARRLGLAGAMVMRLALLASIAWVTRLTNPLFTIFSQEISARDLILLLGGLFLIWKASKEIHESIEGEEEGLKTRVSSFLGAIVQIMLLDIIFSLDSVITAVGLSDHLFIMMAAVVIAVGVMMFAARSIGDFVERHPSVKMLALSFLILVGFTLILESFDIHVPKGYIYFAMFFSIAVESLNLIRNKKNPL.

The Periplasmic portion of the chain corresponds to Met-1–Thr-17. Residues Leu-18–Ala-38 form a helical membrane-spanning segment. Over Lys-39–Arg-50 the chain is Cytoplasmic. The chain crosses the membrane as a helical span at residues Leu-51–Thr-71. The Periplasmic segment spans residues Arg-72–Thr-79. A helical transmembrane segment spans residues Ile-80–Ile-100. At Trp-101–Ser-124 the chain is on the cytoplasmic side. The helical transmembrane segment at Phe-125–Ile-145 threads the bilayer. Over Thr-146–Ser-151 the chain is Periplasmic. Residues Asp-152–Ala-172 form a helical membrane-spanning segment. The Cytoplasmic segment spans residues Arg-173–Lys-186. Residues Met-187–Ile-207 form a helical membrane-spanning segment. Topologically, residues His-208–Val-209 are periplasmic. Residues Pro-210–Ile-230 form a helical membrane-spanning segment. The Cytoplasmic segment spans residues Arg-231–Leu-237.

It belongs to the UPF0053 family.

The protein localises to the cell inner membrane. In Escherichia coli O157:H7, this protein is UPF0053 inner membrane protein YgdQ (ygdQ).